The primary structure comprises 64 residues: Large ribosomal subunit protein bL35 (64 aa).

Residues 22 to 31 are compositionally biased toward basic residues; the sequence is GKVKHGHAYR. A disordered region spans residues 22–64; it reads GKVKHGHAYRSHLAQSKTTKQKRQSRKSTLMNNSDFKRLKKLI.

This sequence belongs to the bacterial ribosomal protein bL35 family.

The chain is Large ribosomal subunit protein bL35 from Mesomycoplasma hyopneumoniae (strain 232) (Mycoplasma hyopneumoniae).